A 430-amino-acid polypeptide reads, in one-letter code: Histidinol dehydrogenase (430 aa).

NAD(+)-binding residues include Tyr130, Gln191, and Asn214. Residues Ser237, Gln259, and His262 each contribute to the substrate site. Residues Gln259 and His262 each contribute to the Zn(2+) site. Catalysis depends on proton acceptor residues Glu327 and His328. Substrate is bound by residues His328, Asp361, Glu415, and His420. Residue Asp361 participates in Zn(2+) binding. Residue His420 participates in Zn(2+) binding.

Belongs to the histidinol dehydrogenase family. The cofactor is Zn(2+).

The enzyme catalyses L-histidinol + 2 NAD(+) + H2O = L-histidine + 2 NADH + 3 H(+). The protein operates within amino-acid biosynthesis; L-histidine biosynthesis; L-histidine from 5-phospho-alpha-D-ribose 1-diphosphate: step 9/9. In terms of biological role, catalyzes the sequential NAD-dependent oxidations of L-histidinol to L-histidinaldehyde and then to L-histidine. This chain is Histidinol dehydrogenase, found in Brucella melitensis biotype 1 (strain ATCC 23456 / CCUG 17765 / NCTC 10094 / 16M).